The primary structure comprises 901 residues: Alpha-actinin-3 (901 aa).

An N-acetylmethionine modification is found at methionine 1. Residues 1–261 form an actin-binding region; that stretch reads MMMVMQPEGL…IMTYVSCFYH (261 aa). Calponin-homology (CH) domains are found at residues 45-149 and 158-264; these read KQQR…LRFA and TSAK…HAFA. Spectrin repeat units lie at residues 288-398, 408-513, 523-634, and 644-747; these read KLME…WLLS, HLAE…ALER, RLQL…TLQE, and RLRR…EVEN. 2 consecutive EF-hand domains span residues 760-795 and 796-831; these read EQLNEFRASFNHFDRKQNGMMEPDDFRACLISMGYD and LGEVEFARIMTMVDPNAAGVVTFQAFIDFMTRETAE. Ca(2+) contacts are provided by aspartate 773, asparagine 777, methionine 779, aspartate 784, aspartate 809, and asparagine 811.

This sequence belongs to the alpha-actinin family. Homodimer; antiparallel. Also forms heterodimers with ACTN2. Interacts with MYOZ1. Expression restricted to fast (type 2) skeletal muscle fibers (at protein level).

Functionally, F-actin cross-linking protein which is thought to anchor actin to a variety of intracellular structures. This is a bundling protein. This is Alpha-actinin-3 (ACTN3) from Homo sapiens (Human).